A 62-amino-acid polypeptide reads, in one-letter code: Conotoxin reg3.5 (62 aa).

The signal sequence occupies residues 1–22 (MMFKLGVLLTICLLLFPLTGTA). Residues 23–49 (LDGDQLAEHMLDISSGINDRWFDPVRK) constitute a propeptide that is removed on maturation. Cystine bridges form between C50-C60, C51-C58, and C56-C61.

Belongs to the conotoxin M superfamily. As to expression, expressed by the venom duct.

It is found in the secreted. The chain is Conotoxin reg3.5 from Conus regius (Crown cone).